Reading from the N-terminus, the 233-residue chain is 2-C-methyl-D-erythritol 4-phosphate cytidylyltransferase (233 aa).

Belongs to the IspD/TarI cytidylyltransferase family. IspD subfamily.

The enzyme catalyses 2-C-methyl-D-erythritol 4-phosphate + CTP + H(+) = 4-CDP-2-C-methyl-D-erythritol + diphosphate. It functions in the pathway isoprenoid biosynthesis; isopentenyl diphosphate biosynthesis via DXP pathway; isopentenyl diphosphate from 1-deoxy-D-xylulose 5-phosphate: step 2/6. Functionally, catalyzes the formation of 4-diphosphocytidyl-2-C-methyl-D-erythritol from CTP and 2-C-methyl-D-erythritol 4-phosphate (MEP). This Carboxydothermus hydrogenoformans (strain ATCC BAA-161 / DSM 6008 / Z-2901) protein is 2-C-methyl-D-erythritol 4-phosphate cytidylyltransferase.